Consider the following 268-residue polypeptide: Shikimate dehydrogenase (NADP(+)) (268 aa).

Shikimate is bound by residues serine 14–serine 16 and threonine 61. The active-site Proton acceptor is lysine 65. 2 residues coordinate shikimate: asparagine 86 and aspartate 102. NADP(+)-binding positions include glycine 126–alanine 130, asparagine 149–lysine 154, and methionine 213. Tyrosine 215 is a binding site for shikimate. Glycine 238 is a binding site for NADP(+).

This sequence belongs to the shikimate dehydrogenase family. As to quaternary structure, homodimer.

It carries out the reaction shikimate + NADP(+) = 3-dehydroshikimate + NADPH + H(+). Its pathway is metabolic intermediate biosynthesis; chorismate biosynthesis; chorismate from D-erythrose 4-phosphate and phosphoenolpyruvate: step 4/7. Its function is as follows. Involved in the biosynthesis of the chorismate, which leads to the biosynthesis of aromatic amino acids. Catalyzes the reversible NADPH linked reduction of 3-dehydroshikimate (DHSA) to yield shikimate (SA). This is Shikimate dehydrogenase (NADP(+)) from Haemophilus influenzae (strain PittEE).